Reading from the N-terminus, the 187-residue chain is MTTTEKIVPRLKTRYRDEIRQALNEEFHYSNAMQVPGVVKVVVNMGVGDAARDSKLIEGAVRDLATITGQKPEIRKARKSIAQFKLREGMPIGARVTLRGDRMWEFIDRLVTIALPRIRDFRGLSGKQFDGKGNYTFGLNEQSMFHEIDPDSIDRPRGMDITVVTTANTDEEGRVLLRRLGFPFKEN.

This sequence belongs to the universal ribosomal protein uL5 family. Part of the 50S ribosomal subunit; part of the 5S rRNA/L5/L18/L25 subcomplex. Contacts the 5S rRNA and the P site tRNA. Forms a bridge to the 30S subunit in the 70S ribosome.

Its function is as follows. This is one of the proteins that bind and probably mediate the attachment of the 5S RNA into the large ribosomal subunit, where it forms part of the central protuberance. In the 70S ribosome it contacts protein S13 of the 30S subunit (bridge B1b), connecting the 2 subunits; this bridge is implicated in subunit movement. Contacts the P site tRNA; the 5S rRNA and some of its associated proteins might help stabilize positioning of ribosome-bound tRNAs. The chain is Large ribosomal subunit protein uL5 from Saccharopolyspora erythraea (strain ATCC 11635 / DSM 40517 / JCM 4748 / NBRC 13426 / NCIMB 8594 / NRRL 2338).